The primary structure comprises 372 residues: Dual-specificity RNA methyltransferase RlmN (372 aa).

The Proton acceptor role is filled by E93. In terms of domain architecture, Radical SAM core spans 99–338 (EKDRATLCIS…VTVRKTRGDD (240 aa)). C106 and C343 are disulfide-bonded. [4Fe-4S] cluster is bound by residues C113, C117, and C120. Residues 167–168 (GE), S199, 221–223 (SLH), and N300 each bind S-adenosyl-L-methionine. Catalysis depends on C343, which acts as the S-methylcysteine intermediate.

The protein belongs to the radical SAM superfamily. RlmN family. [4Fe-4S] cluster serves as cofactor.

The protein localises to the cytoplasm. It catalyses the reaction adenosine(2503) in 23S rRNA + 2 reduced [2Fe-2S]-[ferredoxin] + 2 S-adenosyl-L-methionine = 2-methyladenosine(2503) in 23S rRNA + 5'-deoxyadenosine + L-methionine + 2 oxidized [2Fe-2S]-[ferredoxin] + S-adenosyl-L-homocysteine. The catalysed reaction is adenosine(37) in tRNA + 2 reduced [2Fe-2S]-[ferredoxin] + 2 S-adenosyl-L-methionine = 2-methyladenosine(37) in tRNA + 5'-deoxyadenosine + L-methionine + 2 oxidized [2Fe-2S]-[ferredoxin] + S-adenosyl-L-homocysteine. Functionally, specifically methylates position 2 of adenine 2503 in 23S rRNA and position 2 of adenine 37 in tRNAs. m2A2503 modification seems to play a crucial role in the proofreading step occurring at the peptidyl transferase center and thus would serve to optimize ribosomal fidelity. The polypeptide is Dual-specificity RNA methyltransferase RlmN (Psychromonas ingrahamii (strain DSM 17664 / CCUG 51855 / 37)).